Reading from the N-terminus, the 323-residue chain is tRNA dimethylallyltransferase (323 aa).

15 to 22 (GATGSGKT) provides a ligand contact to ATP. 17–22 (TGSGKT) contacts substrate. Interaction with substrate tRNA stretches follow at residues 40–43 (DSRQ) and 164–168 (QRLIR).

This sequence belongs to the IPP transferase family. Monomer. Requires Mg(2+) as cofactor.

The catalysed reaction is adenosine(37) in tRNA + dimethylallyl diphosphate = N(6)-dimethylallyladenosine(37) in tRNA + diphosphate. In terms of biological role, catalyzes the transfer of a dimethylallyl group onto the adenine at position 37 in tRNAs that read codons beginning with uridine, leading to the formation of N6-(dimethylallyl)adenosine (i(6)A). This chain is tRNA dimethylallyltransferase, found in Chloroherpeton thalassium (strain ATCC 35110 / GB-78).